Here is a 65-residue protein sequence, read N- to C-terminus: Large ribosomal subunit protein bL35 (65 aa).

This sequence belongs to the bacterial ribosomal protein bL35 family.

This is Large ribosomal subunit protein bL35 from Buchnera aphidicola subsp. Acyrthosiphon pisum (strain 5A).